The sequence spans 294 residues: Endonuclease 3 (294 aa).

The signal sequence occupies residues methionine 1 to cysteine 24. The a divalent metal cation site is built by tryptophan 25 and histidine 30. Residue tryptophan 25–histidine 30 coordinates substrate. A disulfide bridge links cysteine 34 with cysteine 65. 2 residues coordinate a divalent metal cation: aspartate 69 and histidine 84. Residues aspartate 69 to proline 75, histidine 84 to aspartate 87, and asparagine 94 to arginine 99 contribute to the substrate site. 3 cysteine pairs are disulfide-bonded: cysteine 93–cysteine 241, cysteine 101–cysteine 106, and cysteine 221–cysteine 228. 2 residues coordinate substrate: asparagine 113 and tyrosine 131. The N-linked (GlcNAc...) asparagine glycan is linked to asparagine 113. N-linked (GlcNAc...) asparagine glycosylation is present at asparagine 132. Positions 142, 146, 152, 176, and 180 each coordinate a divalent metal cation. The substrate binding stretch occupies residues histidine 142–tyrosine 191. Residues asparagine 193, asparagine 224, and asparagine 247 are each glycosylated (N-linked (GlcNAc...) asparagine). Residues glycine 279–alanine 294 constitute a propeptide, removed in mature form.

It belongs to the nuclease type I family. As to quaternary structure, monomer. The cofactor is Zn(2+). Mn(2+) serves as cofactor.

The catalysed reaction is Endonucleolytic cleavage to 5'-phosphomononucleotide and 5'-phosphooligonucleotide end-products.. In terms of biological role, endonuclease that can use RNA and single-stranded DNA as substrates. In contradiction with PubMed:23620482, cannot hydrolyze single-stranded DNA and does not cleave mismatches. The chain is Endonuclease 3 from Arabidopsis thaliana (Mouse-ear cress).